The primary structure comprises 330 residues: Phenylalanine--tRNA ligase alpha subunit (330 aa).

Glu-255 serves as a coordination point for Mg(2+).

This sequence belongs to the class-II aminoacyl-tRNA synthetase family. Phe-tRNA synthetase alpha subunit type 1 subfamily. Tetramer of two alpha and two beta subunits. Mg(2+) is required as a cofactor.

It is found in the cytoplasm. The catalysed reaction is tRNA(Phe) + L-phenylalanine + ATP = L-phenylalanyl-tRNA(Phe) + AMP + diphosphate + H(+). In Acinetobacter baylyi (strain ATCC 33305 / BD413 / ADP1), this protein is Phenylalanine--tRNA ligase alpha subunit.